Consider the following 749-residue polypeptide: Transcription factor RFX3 (749 aa).

Residues 183–258 (HLQWLLDNYE…YHYYGIRVKP (76 aa)) constitute a DNA-binding region (RFX-type winged-helix). Residues 663 to 699 (VSPGNLDKDEGSEVESEMDEELDDSSEPQAKREKTEL) are disordered. Positions 674 to 688 (SEVESEMDEELDDSS) are enriched in acidic residues.

It belongs to the RFX family. As to quaternary structure, heterodimer; heterodimerizes with RFX1 and RFX2, and RFX6.

The protein resides in the nucleus. In terms of biological role, transcription factor required for ciliogenesis and islet cell differentiation during endocrine pancreas development. Essential for the differentiation of nodal monocilia and left-right asymmetry specification during embryogenesis. Required for the biogenesis of motile cilia by governing growth and beating efficiency of motile cells. Also required for ciliated ependymal cell differentiation. Regulates the expression of genes involved in ciliary assembly (DYNC2LI1, FOXJ1 and BBS4) and genes involved in ciliary motility (DNAH11, DNAH9 and DNAH5). Together with RFX6, participates in the differentiation of 4 of the 5 islet cell types during endocrine pancreas development, with the exception of pancreatic PP (polypeptide-producing) cells. Regulates transcription by forming a heterodimer with another RFX protein and binding to the X-box in the promoter of target genes. Represses transcription of MAP1A in non-neuronal cells but not in neuronal cells. This chain is Transcription factor RFX3 (RFX3), found in Macaca fascicularis (Crab-eating macaque).